A 1179-amino-acid chain; its full sequence is Dynein axonemal assembly factor 9 (1179 aa).

Interacts with ARL3.

Functionally, may act as an effector for ARL3. This is Dynein axonemal assembly factor 9 from Mus musculus (Mouse).